Reading from the N-terminus, the 257-residue chain is UPF0246 protein CPS_4102 (257 aa).

Belongs to the UPF0246 family.

This chain is UPF0246 protein CPS_4102, found in Colwellia psychrerythraea (strain 34H / ATCC BAA-681) (Vibrio psychroerythus).